The following is a 466-amino-acid chain: GTPase Der (466 aa).

EngA-type G domains follow at residues 30–193 and 203–376; these read PVVA…PEVS and RRVA…ASWD. GTP-binding positions include 36 to 43, 83 to 87, 145 to 148, 209 to 216, 256 to 260, and 321 to 324; these read GRPNVGKS, DTGGW, NKVD, GKPNVGKS, DTAGL, and NKWD. One can recognise a KH-like domain in the interval 377–459; that stretch reads TRIATGPLNS…PIRINVRVRE (83 aa).

It belongs to the TRAFAC class TrmE-Era-EngA-EngB-Septin-like GTPase superfamily. EngA (Der) GTPase family. Associates with the 50S ribosomal subunit.

GTPase that plays an essential role in the late steps of ribosome biogenesis. This Mycolicibacterium paratuberculosis (strain ATCC BAA-968 / K-10) (Mycobacterium paratuberculosis) protein is GTPase Der.